Consider the following 167-residue polypeptide: Insertion element IS1 1 protein InsB (167 aa).

Belongs to the transposase 27 family.

Its function is as follows. Absolutely required for transposition of IS1. In Escherichia coli (strain K12), this protein is Insertion element IS1 1 protein InsB (insB1).